We begin with the raw amino-acid sequence, 142 residues long: MKTFVAKPAAVKRDWYVVDAEGKTLGRIATEIASRLRGKHKAEYTPHVDTGDYIIVINAEKVRVTGNKAAGKIYYRHSEFPGGLKSISFEKLIDRKPEMVIELAVKGMLPRGPLGRAMYRKLKVYAGVEHNHSAQQPQVLDI.

It belongs to the universal ribosomal protein uL13 family. Part of the 50S ribosomal subunit.

Its function is as follows. This protein is one of the early assembly proteins of the 50S ribosomal subunit, although it is not seen to bind rRNA by itself. It is important during the early stages of 50S assembly. This is Large ribosomal subunit protein uL13 from Aliivibrio salmonicida (strain LFI1238) (Vibrio salmonicida (strain LFI1238)).